The sequence spans 161 residues: Peroxynitrite isomerase 2 (161 aa).

Residues 17 to 23 (GTWAGQG) carry the GXWXGXG motif. His-152 contacts heme b.

It belongs to the nitrobindin family. In terms of assembly, homodimer. The cofactor is heme b.

The enzyme catalyses peroxynitrite = nitrate. Its pathway is nitrogen metabolism. In terms of biological role, heme-binding protein able to scavenge peroxynitrite and to protect free L-tyrosine against peroxynitrite-mediated nitration, by acting as a peroxynitrite isomerase that converts peroxynitrite to nitrate. Therefore, this protein likely plays a role in peroxynitrite sensing and in the detoxification of reactive nitrogen and oxygen species (RNS and ROS, respectively). Is able to bind nitric oxide (NO) in vitro, but may act as a sensor of peroxynitrite levels in vivo. This Mycobacterium marinum (strain ATCC BAA-535 / M) protein is Peroxynitrite isomerase 2.